The chain runs to 910 residues: Protein kinase 3 (910 aa).

Residues 119–129 (SPSGGGGGGSG) show a composition bias toward gly residues. Disordered regions lie at residues 119 to 239 (SPSG…PNLI), 270 to 295 (FNNNNNNNNSNLTTTTTTTSTFKTPT), and 391 to 454 (NKDD…NDKK). Composition is skewed to low complexity over residues 130–160 (VSSNGSNSTATSPNTSPIRLYVSDPSNQPTS), 169–196 (LSESVGVHRSSPMLSSSRMISQLSQSTS), 209–220 (GLSGSSTSSSSA), 227–239 (NNNANNSTPPNLI), 270–290 (FNNNNNNNNSNLTTTTTTTST), and 422–450 (INQPSSLPSNNNSNNNNITKSNSTTTSQT). Positions 498–763 (FELLKVLGVG…FEEISSHPFF (266 aa)) constitute a Protein kinase domain. Residues 504-512 (LGVGSFGRV) and K527 each bind ATP. The active-site Proton acceptor is the D621. Residue T664 is modified to Phosphothreonine; by autocatalysis. One can recognise an AGC-kinase C-terminal domain in the interval 764-854 (ELIPWRMLES…NKEEEDGIMG (91 aa)). 2 disordered regions span residues 786 to 812 (EISLPNSNSNSNNNSQQPTNNNLTLSC) and 859 to 910 (IGSI…KGSV). Composition is skewed to low complexity over residues 788–809 (SLPNSNSNSNNNSQQPTNNNLT) and 859–886 (IGSISSNNSISSSPTSSSPINNNNSGGS).

Belongs to the protein kinase superfamily. AGC Ser/Thr protein kinase family.

The catalysed reaction is L-seryl-[protein] + ATP = O-phospho-L-seryl-[protein] + ADP + H(+). The enzyme catalyses L-threonyl-[protein] + ATP = O-phospho-L-threonyl-[protein] + ADP + H(+). This is Protein kinase 3 (pkgC) from Dictyostelium discoideum (Social amoeba).